Reading from the N-terminus, the 78-residue chain is Beta-defensin 12 (78 aa).

The signal sequence occupies residues 1–27 (MALSREVFYFGFALFFIVVELPSGSWA). 3 disulfides stabilise this stretch: Cys-46/Cys-73, Cys-53/Cys-67, and Cys-57/Cys-74.

It belongs to the beta-defensin family. As to expression, only expressed in epididymis (caput, corpus and cauda).

Its subcellular location is the secreted. Functionally, has antibacterial activity. This Mus musculus (Mouse) protein is Beta-defensin 12 (Defb12).